The following is a 129-amino-acid chain: Gem-associated protein 7 (129 aa).

M1 carries the post-translational modification N-acetylmethionine. The SUZ-C domain maps to 1-31 (MQSPLTIPVPVPVLRLPRGPDGFSRGFASDG). In terms of domain architecture, Sm spans 63 to 129 (RYLRSLLAMV…SDIISYSFKL (67 aa)).

Belongs to the gemin-7 family. As to quaternary structure, part of the core SMN complex that contains SMN1, GEMIN2/SIP1, DDX20/GEMIN3, GEMIN4, GEMIN5, GEMIN6, GEMIN7, GEMIN8 and STRAP/UNRIP. Part of the SMN-Sm complex that contains SMN1, GEMIN2/SIP1, DDX20/GEMIN3, GEMIN4, GEMIN5, GEMIN6, GEMIN7, GEMIN8, STRAP/UNRIP and the Sm proteins SNRPB, SNRPD1, SNRPD2, SNRPD3, SNRPE, SNRPF and SNRPG. Interacts with GEMIN6; the interaction is direct. Interacts with STRAP/UNRIP; the interaction is direct. Interacts with GEMIN8; the interaction is direct. Interacts with SNRPB, SNRPD2, SNRPD3 and SNRPE; the interaction is direct.

It localises to the nucleus. Its subcellular location is the nucleoplasm. The protein resides in the gem. It is found in the cytoplasm. Functionally, the SMN complex catalyzes the assembly of small nuclear ribonucleoproteins (snRNPs), the building blocks of the spliceosome, and thereby plays an important role in the splicing of cellular pre-mRNAs. Most spliceosomal snRNPs contain a common set of Sm proteins SNRPB, SNRPD1, SNRPD2, SNRPD3, SNRPE, SNRPF and SNRPG that assemble in a heptameric protein ring on the Sm site of the small nuclear RNA to form the core snRNP (Sm core). In the cytosol, the Sm proteins SNRPD1, SNRPD2, SNRPE, SNRPF and SNRPG are trapped in an inactive 6S pICln-Sm complex by the chaperone CLNS1A that controls the assembly of the core snRNP. To assemble core snRNPs, the SMN complex accepts the trapped 5Sm proteins from CLNS1A forming an intermediate. Binding of snRNA inside 5Sm triggers eviction of the SMN complex, thereby allowing binding of SNRPD3 and SNRPB to complete assembly of the core snRNP. This is Gem-associated protein 7 (Gemin7) from Mus musculus (Mouse).